We begin with the raw amino-acid sequence, 311 residues long: Small ribosomal subunit biogenesis GTPase RsgA (311 aa).

The CP-type G domain maps to Ser88–Phe246. GTP contacts are provided by residues Asn137–Asp140 and Gly188–Thr196. Zn(2+) contacts are provided by Cys270, Cys275, His277, and Cys283.

This sequence belongs to the TRAFAC class YlqF/YawG GTPase family. RsgA subfamily. As to quaternary structure, monomer. Associates with 30S ribosomal subunit, binds 16S rRNA. Requires Zn(2+) as cofactor.

It is found in the cytoplasm. Its function is as follows. One of several proteins that assist in the late maturation steps of the functional core of the 30S ribosomal subunit. Helps release RbfA from mature subunits. May play a role in the assembly of ribosomal proteins into the subunit. Circularly permuted GTPase that catalyzes slow GTP hydrolysis, GTPase activity is stimulated by the 30S ribosomal subunit. The protein is Small ribosomal subunit biogenesis GTPase RsgA of Chlorobaculum tepidum (strain ATCC 49652 / DSM 12025 / NBRC 103806 / TLS) (Chlorobium tepidum).